Reading from the N-terminus, the 73-residue chain is Large ribosomal subunit protein bL27c (73 aa).

Belongs to the bacterial ribosomal protein bL27 family.

Its subcellular location is the plastid. The protein resides in the chloroplast. This Haptolina hirta (Plankton alga) protein is Large ribosomal subunit protein bL27c (rpl27).